A 468-amino-acid polypeptide reads, in one-letter code: MKQFMDKDFLLSTPTAQHLFHDYAAKMPILDYHCHINPREIAEDRKFENITQVWLGGDHYKWRQMRTNGVDEKYITGDASDREKFQKWAETLEMAIGNPLYHWSHLELQRYFGYNGILNGDTAEEVWNLCNAKLQEDSMSVRNLIKQSNVTLICTTDDPVDSLEWHQVLKDDKTFDVQVLPAWRPDKAMNIEKPEYLDYLETLSNVSGIKVNSFASLIDALKNRMDFFASMGCSVSDHALEYVMYKPYTEEEIEAIFAKRFSGSAITTEEMNKFKTAFMVSVGKEYNKRNWVMQIHYGTIRDNNRFRYDQLGPDTGFDCINTYDCSAEMAQFLNALNATDELPKTIIYSLNPSVNAAIGTVIGCFQDSKAVGKIQQGSAWWFNDHKVGMTNQMTSLANLSLLGNFIGMLTDSRSFLSYTRHEYFRRIMCELIGGWVENGEYPADEKALKKIVEGISYNNAVRYFGFDL.

Belongs to the metallo-dependent hydrolases superfamily. Uronate isomerase family.

The enzyme catalyses D-glucuronate = D-fructuronate. It catalyses the reaction aldehydo-D-galacturonate = keto-D-tagaturonate. Its pathway is carbohydrate metabolism; pentose and glucuronate interconversion. In Lachnospira eligens (strain ATCC 27750 / DSM 3376 / VPI C15-48 / C15-B4) (Eubacterium eligens), this protein is Uronate isomerase.